The sequence spans 728 residues: 1,4-alpha-glucan branching enzyme GlgB (728 aa).

The active-site Nucleophile is Asp405. Catalysis depends on Glu458, which acts as the Proton donor.

This sequence belongs to the glycosyl hydrolase 13 family. GlgB subfamily. As to quaternary structure, monomer.

The catalysed reaction is Transfers a segment of a (1-&gt;4)-alpha-D-glucan chain to a primary hydroxy group in a similar glucan chain.. Its pathway is glycan biosynthesis; glycogen biosynthesis. Catalyzes the formation of the alpha-1,6-glucosidic linkages in glycogen by scission of a 1,4-alpha-linked oligosaccharide from growing alpha-1,4-glucan chains and the subsequent attachment of the oligosaccharide to the alpha-1,6 position. This is 1,4-alpha-glucan branching enzyme GlgB from Shigella boydii serotype 4 (strain Sb227).